The primary structure comprises 349 residues: CCN family member 2 (349 aa).

Residues 1-26 form the signal peptide; that stretch reads MSATGLGPVRCAFVLLLALCSRPASS. An IGFBP N-terminal domain is found at 27 to 98; the sequence is QDCSAPCQCP…NRKIGVCTAK (72 aa). Cystine bridges form between Cys-29/Cys-54, Cys-33/Cys-56, Cys-35/Cys-57, Cys-43/Cys-60, Cys-68/Cys-82, and Cys-74/Cys-95. A VWFC domain is found at 101 to 167; sequence APCVFGGTVY…GKCCEEWVCD (67 aa). Residues 198–243 enclose the TSP type-1 domain; sequence NCLVQTTEWSACSKTCGMGISTRVTNDNAFCRLEKQSRLCMVRPCE. A heparin-binding region spans residues 247 to 349; that stretch reads EENIKKGKKC…YYRKMYGDMA (103 aa). Cystine bridges form between Cys-256-Cys-293, Cys-273-Cys-307, Cys-284-Cys-323, Cys-287-Cys-325, and Cys-292-Cys-329. In terms of domain architecture, CTCK spans 256–330; it reads CIRTPKISKP…KTCACHYNCP (75 aa).

This sequence belongs to the CCN family. As to quaternary structure, monomer. Interacts with TSKU.

The protein localises to the secreted. It localises to the extracellular space. The protein resides in the extracellular matrix. Its function is as follows. Major connective tissue mitoattractant secreted by vascular endothelial cells. Promotes proliferation and differentiation of chondrocytes. Is involved in the stimulation of osteoblast differentiation and has a critical role in osteogenesis. Mediates heparin- and divalent cation-dependent cell adhesion in many cell types including fibroblasts, myofibroblasts, endothelial and epithelial cells. Enhances fibroblast growth factor-induced DNA synthesis. In Bos taurus (Bovine), this protein is CCN family member 2 (CCN2).